Reading from the N-terminus, the 206-residue chain is LexA repressor (206 aa).

Residues 28–48 (RAEIARRLGFKSANAAEEHLK) constitute a DNA-binding region (H-T-H motif). Active-site for autocatalytic cleavage activity residues include S123 and K160.

It belongs to the peptidase S24 family. As to quaternary structure, homodimer.

The catalysed reaction is Hydrolysis of Ala-|-Gly bond in repressor LexA.. Represses a number of genes involved in the response to DNA damage (SOS response), including recA and lexA. In the presence of single-stranded DNA, RecA interacts with LexA causing an autocatalytic cleavage which disrupts the DNA-binding part of LexA, leading to derepression of the SOS regulon and eventually DNA repair. In Shewanella piezotolerans (strain WP3 / JCM 13877), this protein is LexA repressor.